A 673-amino-acid polypeptide reads, in one-letter code: Fatty acyl-CoA synthetase B (673 aa).

Residues Met1–Ala18 form the signal peptide. Asn267 carries an N-linked (GlcNAc...) asparagine glycan.

The protein belongs to the ATP-dependent AMP-binding enzyme family.

The protein resides in the endoplasmic reticulum. The enzyme catalyses a long-chain fatty acid + ATP + CoA = a long-chain fatty acyl-CoA + AMP + diphosphate. Its function is as follows. Long chain fatty acid acyl-CoA synthetases catalyze the formation of a thiester bond between a free fatty acid and coenzyme A during fatty acid metabolic process. The chain is Fatty acyl-CoA synthetase B (fcsB) from Dictyostelium discoideum (Social amoeba).